Consider the following 364-residue polypeptide: 3-isopropylmalate dehydrogenase (364 aa).

Position 79–90 (79–90) interacts with NAD(+); sequence GPKWGTGSVRPE. Arg-97, Arg-107, Arg-136, and Asp-225 together coordinate substrate. Residues Asp-225, Asp-250, and Asp-254 each contribute to the Mg(2+) site. 289-300 contributes to the NAD(+) binding site; it reads GSAPDLPKNKVN.

Belongs to the isocitrate and isopropylmalate dehydrogenases family. In terms of assembly, homodimer. The cofactor is Mg(2+). It depends on Mn(2+) as a cofactor.

The protein localises to the cytoplasm. It catalyses the reaction (2R,3S)-3-isopropylmalate + NAD(+) = 4-methyl-2-oxopentanoate + CO2 + NADH. It participates in amino-acid biosynthesis; L-leucine biosynthesis; L-leucine from 3-methyl-2-oxobutanoate: step 3/4. Functionally, catalyzes the oxidation of 3-carboxy-2-hydroxy-4-methylpentanoate (3-isopropylmalate) to 3-carboxy-4-methyl-2-oxopentanoate. The product decarboxylates to 4-methyl-2 oxopentanoate. The protein is 3-isopropylmalate dehydrogenase (LEU2) of Saccharomyces cerevisiae (strain ATCC 204508 / S288c) (Baker's yeast).